The sequence spans 547 residues: Puff-specific protein Bx42 (547 aa).

Residues 177 to 343 are SNW; sequence AQYIRYTPSQ…AREERAGLRN (167 aa). Phosphoserine is present on residues serine 227 and serine 235. Disordered regions lie at residues 333–398 and 486–547; these read RARE…ERDI and QFSG…SKRD. Basic and acidic residues-rich tracts occupy residues 358-398 and 526-539; these read EVRE…ERDI and KRAE…SSHS.

The protein belongs to the SNW family.

Its subcellular location is the nucleus. Functionally, may play a role in chromatin structure and function. The protein is Puff-specific protein Bx42 (Bx42) of Drosophila melanogaster (Fruit fly).